We begin with the raw amino-acid sequence, 263 residues long: MVLVYKYFSCENEIENSIKPVINLMESSLLDKTTSNSIVLTTFNDFSNWARLSSLWPLLYGTSCCFIESASLIGSRSDSDRYGLVPRSSPRQADLVITAGTVTMKMAPSLVRLYEQMPEPKYVIAMGACTITGGMFSTDSYSTVRGVDKPIPVDVYLPGCPPKPEAIIDAIVKLRKRVAQETYESKIRLKPGNRFFTSIHQFRFVSNNLTGEYSKQSLRQFTKTELYSTLEVPFDETTDEYKGSAVSFQESMDEGDPVAIDKP.

Residues cysteine 64, cysteine 65, cysteine 129, and cysteine 160 each contribute to the [4Fe-4S] cluster site.

Belongs to the complex I 20 kDa subunit family. NDH is composed of at least 16 different subunits, 5 of which are encoded in the nucleus. [4Fe-4S] cluster is required as a cofactor.

It is found in the plastid. The protein resides in the chloroplast thylakoid membrane. It carries out the reaction a plastoquinone + NADH + (n+1) H(+)(in) = a plastoquinol + NAD(+) + n H(+)(out). The enzyme catalyses a plastoquinone + NADPH + (n+1) H(+)(in) = a plastoquinol + NADP(+) + n H(+)(out). Its function is as follows. NDH shuttles electrons from NAD(P)H:plastoquinone, via FMN and iron-sulfur (Fe-S) centers, to quinones in the photosynthetic chain and possibly in a chloroplast respiratory chain. The immediate electron acceptor for the enzyme in this species is believed to be plastoquinone. Couples the redox reaction to proton translocation, and thus conserves the redox energy in a proton gradient. The sequence is that of NAD(P)H-quinone oxidoreductase subunit K, chloroplastic (ndhK) from Huperzia lucidula (Shining clubmoss).